Consider the following 292-residue polypeptide: AKT-interacting protein (292 aa).

Positions 1 to 11 (MNPFWSMSTSS) are enriched in polar residues. The disordered stretch occupies residues 1–63 (MNPFWSMSTS…TSPAPAAQST (63 aa)). A compositionally biased stretch (basic and acidic residues) spans 14 to 23 (KRSEGEEKTL). The residue at position 30 (Ser30) is a Phosphoserine. The region spanning 74-222 (YLEYSLLAEF…VVDSVKVCTA (149 aa)) is the UBC core domain.

Belongs to the ubiquitin-conjugating enzyme family. FTS subfamily. As to quaternary structure, component of the FTS/Hook/FHIP complex (FHF complex), composed of AKTIP/FTS, FHIP1B, and one or more members of the Hook family of proteins HOOK1, HOOK2, and HOOK3. Interacts directly with HOOK1, HOOK2 and HOOK3. The FHF complex associates with the homotypic vesicular sorting complex (the HOPS complex). Also interacts with AKT1. May interact with FHIP1A.

Its subcellular location is the cytoplasm. It is found in the cell membrane. Functionally, component of the FTS/Hook/FHIP complex (FHF complex). The FHF complex may function to promote vesicle trafficking and/or fusion via the homotypic vesicular protein sorting complex (the HOPS complex). Regulates apoptosis by enhancing phosphorylation and activation of AKT1. Increases release of TNFSF6 via the AKT1/GSK3B/NFATC1 signaling cascade. FHF complex promotes the distribution of AP-4 complex to the perinuclear area of the cell. The sequence is that of AKT-interacting protein from Homo sapiens (Human).